The following is a 500-amino-acid chain: NAD(P)H-quinone oxidoreductase chain 4, chloroplastic (500 aa).

Helical transmembrane passes span Phe4 to Leu24, Ile37 to Leu57, Leu80 to Ala100, Leu113 to Ser130, Leu134 to Met154, Phe167 to Leu187, Ala208 to Ile228, His242 to Val262, Ala272 to Ala292, Ile305 to Asp325, Gly330 to Gly350, Leu386 to Thr406, Ile416 to Met436, and Ile462 to Val482.

It belongs to the complex I subunit 4 family.

The protein localises to the plastid. Its subcellular location is the chloroplast thylakoid membrane. It catalyses the reaction a plastoquinone + NADH + (n+1) H(+)(in) = a plastoquinol + NAD(+) + n H(+)(out). It carries out the reaction a plastoquinone + NADPH + (n+1) H(+)(in) = a plastoquinol + NADP(+) + n H(+)(out). In Nuphar advena (Common spatterdock), this protein is NAD(P)H-quinone oxidoreductase chain 4, chloroplastic.